We begin with the raw amino-acid sequence, 1405 residues long: Protein translocase subunit SecA (1405 aa).

The interval methionine 1–glutamate 1099 is protein translocase subunit SecA. Residues glutamine 88, glycine 106–serine 110, and aspartate 494 each bind ATP. The segment at serine 1100–lysine 1405 is unknown.

This sequence belongs to the SecA family. In terms of assembly, monomer and homodimer. Part of the essential Sec protein translocation apparatus which comprises SecA, SecYEG and auxiliary proteins SecDF. Other proteins may also be involved.

It is found in the cell membrane. Its subcellular location is the cytoplasm. The catalysed reaction is ATP + H2O + cellular proteinSide 1 = ADP + phosphate + cellular proteinSide 2.. Part of the Sec protein translocase complex. Interacts with the SecYEG preprotein conducting channel. Has a central role in coupling the hydrolysis of ATP to the transfer of proteins into and across the cell membrane, serving as an ATP-driven molecular motor driving the stepwise translocation of polypeptide chains across the membrane. In Malacoplasma penetrans (strain HF-2) (Mycoplasma penetrans), this protein is Protein translocase subunit SecA.